Consider the following 780-residue polypeptide: Catenin beta-1 (780 aa).

Positions 34 to 56 (GIHSGATTTAPSLSGKGNPEDDD) are disordered. ARM repeat units lie at residues 140 to 179 (NYQDDAELATRAIPELTKLLNDEDQVVVNKAAVMVHQLSK), 224 to 263 (REGLLAIFKSGGIPALVKMLGSPVDSVLFYAITTLHNLLL), 266 to 305 (EGAKMAVRLAGGLQKMVALLNKTNVKFLAITTDCLQILAY), 350 to 389 (SSNKPAIVEAGGMQALGLHLTDPSQRLVQNCLWTLRNLSD), 399 to 430 (GLLGTLVQLLGSDDINVVTCAAGILSNLTCNN), 431 to 472 (YKNK…HLTS), 478 to 518 (EMAQ…NLAL), 520 to 561 (PANH…QFVE), 583 to 622 (IHNRIVIRGLNTIPLFVQLLYSPIENIQRVAAGVLCELAQ), and 624 to 663 (KEAAEAIEAEGATAPLTELLHSRNEGVATYAAAVLFRMSE). Over residues 735–744 (EHEMAGHHPG) the composition is skewed to basic and acidic residues. The disordered stretch occupies residues 735 to 770 (EHEMAGHHPGPDYPVDGLPDLGHTQDLIDGLPPGDS).

Belongs to the beta-catenin family. In terms of assembly, interacts with adnpa. Interacts with cdh1 during oogenesis and in the unfertilized egg. Interacts with ctnna1 and cdh2. Phosphorylation by gsk3b promotes ubiquitination and subsequent degradation by the proteasome. Post-translationally, ubiquitinated when phosphorylated by gsk3b, leading to its degradation. As to expression, expressed in the successional lamina, also expressed in both the epithelial and mesenchymal cells of the developing replacement tooth (at protein level). Expressed in the enamel organ as well as in the inner and outer dental epithelium during replacement tooth morphogenesis (at protein level). Expressed in the differentiated, polarized odontoblasts that line the dentine matrix as well as in the inner and outer dental epithelium during tooth cytodifferentiation (at protein level). Expressed in the reduced enamel organ, odontoblasts and weakly at the center of the dental papilla of the functional tooth as well as in the epithelial crypts surrounding the functional tooth (at protein level). Expressed in the liver (at protein level). Expressed at intercalated disks in the heart (at protein level). Expressed in the ovary.

The protein resides in the cytoplasm. It localises to the nucleus. Its subcellular location is the cell membrane. The protein localises to the cell junction. It is found in the adherens junction. Key downstream component of the canonical Wnt signaling pathway. In the absence of Wnt, forms a complex with axin1, axin2, apc, csnk1a1 and gsk3b that promotes phosphorylation on N-terminal Ser and Thr residues and ubiquitination of ctnnb1 and its subsequent degradation by the proteasome. In the presence of Wnt ligand, ctnnb1 is not ubiquitinated and accumulates in the nucleus, where it acts as a coactivator for transcription factors of the TCF/LEF family, leading to activate Wnt responsive genes. Plays a key role in dorsoventral patterning: in prospective ventral blastomeres, its down-regulation by axin1 and axin2 leads to inhibit the Wnt signaling pathway, while in prospective dorsal blastomeres, degradation of axin results in stabilization and nuclear translocation of ctnnb1. This Danio rerio (Zebrafish) protein is Catenin beta-1.